Here is a 425-residue protein sequence, read N- to C-terminus: MNNIVIVGLQWGDEGKGKIVDYLSENADVVVRFQGGNNAGHTIVVDDEVYKLNLLPSAVLRPGKISIIGNGVALDSHALISEIESLKVKGVDVNYNNLMVSESCPLILSVHKDKEKLFEDLNGNHKIGTTNKGIGPCYEDKVGRRAIRLCDLENADELNKRLDTLLNYHNAIRKGLNYQVVKKEEILKEIQEISEKILSYKKPVWKILNDLMKEGKKIIFEGAQGAFLDIDHGTYPFVTSSNTVASQAITGSGLSSNAYIIGVVKAYTTRVGNGPFPTEQKNEVGDSLFTIGKELGTVSNRRRRCGWFDAVLVRQAVQLSGVSSIVLTKLDVLNSFDTIKICTGYKYSGKMYDYLPASHSIQGELEPIYEEFPGWKENTQGKRSIETLPINLIKYIEGLEKLIGVPIHLISTSPKREDVIKLKDF.

GTP is bound by residues 12 to 18 and 40 to 42; these read GDEGKGK and GHT. D13 acts as the Proton acceptor in catalysis. Residues D13 and G40 each contribute to the Mg(2+) site. IMP is bound by residues 13 to 16, 38 to 41, T130, R144, Q224, T239, and R301; these read DEGK and NAGH. H41 functions as the Proton donor in the catalytic mechanism. A substrate-binding site is contributed by 297 to 303; that stretch reads TVSNRRR. GTP contacts are provided by residues R303, 329 to 331, and 411 to 413; these read KLD and STS.

The protein belongs to the adenylosuccinate synthetase family. In terms of assembly, homodimer. Requires Mg(2+) as cofactor.

It is found in the cytoplasm. The catalysed reaction is IMP + L-aspartate + GTP = N(6)-(1,2-dicarboxyethyl)-AMP + GDP + phosphate + 2 H(+). It participates in purine metabolism; AMP biosynthesis via de novo pathway; AMP from IMP: step 1/2. Its function is as follows. Plays an important role in the de novo pathway of purine nucleotide biosynthesis. Catalyzes the first committed step in the biosynthesis of AMP from IMP. This chain is Adenylosuccinate synthetase, found in Wolbachia sp. subsp. Drosophila simulans (strain wRi).